The chain runs to 329 residues: Myoblast determination protein 1 homolog (329 aa).

Positions 160 to 211 (DRRKAATMRERRRLRKVNEAFEVVKQRTCPNPNQRLPKVEILRSAIDYINTL) constitute a bHLH domain. Residues 256–279 (NPDGPNVYDDEDLSDTDEDRDHHH) are disordered. Acidic residues predominate over residues 263 to 273 (YDDEDLSDTDE).

Efficient DNA binding requires dimerization with another bHLH protein. In terms of tissue distribution, body wall muscle cells; in clonal muscle precursors, in a set of early embryonic blastomeres (the ms-granddaughters), and in six glial-like cells called GLRS.

It is found in the nucleus. Functionally, accumulation defines the body wall muscle cell fate during embryogenesis. The protein is Myoblast determination protein 1 homolog (hlh-1) of Caenorhabditis briggsae.